The sequence spans 435 residues: ATP-dependent protease ATPase subunit HslU (435 aa).

Residues Ile-18, 60–65 (GVGKTE), Asp-248, Glu-313, and Arg-385 contribute to the ATP site.

It belongs to the ClpX chaperone family. HslU subfamily. As to quaternary structure, a double ring-shaped homohexamer of HslV is capped on each side by a ring-shaped HslU homohexamer. The assembly of the HslU/HslV complex is dependent on binding of ATP.

The protein resides in the cytoplasm. ATPase subunit of a proteasome-like degradation complex; this subunit has chaperone activity. The binding of ATP and its subsequent hydrolysis by HslU are essential for unfolding of protein substrates subsequently hydrolyzed by HslV. HslU recognizes the N-terminal part of its protein substrates and unfolds these before they are guided to HslV for hydrolysis. The polypeptide is ATP-dependent protease ATPase subunit HslU (Rhizobium etli (strain CIAT 652)).